The primary structure comprises 288 residues: ATP synthase gamma chain (288 aa).

The protein belongs to the ATPase gamma chain family. As to quaternary structure, F-type ATPases have 2 components, CF(1) - the catalytic core - and CF(0) - the membrane proton channel. CF(1) has five subunits: alpha(3), beta(3), gamma(1), delta(1), epsilon(1). CF(0) has three main subunits: a, b and c.

It is found in the cell inner membrane. In terms of biological role, produces ATP from ADP in the presence of a proton gradient across the membrane. The gamma chain is believed to be important in regulating ATPase activity and the flow of protons through the CF(0) complex. The polypeptide is ATP synthase gamma chain (Polaromonas sp. (strain JS666 / ATCC BAA-500)).